The primary structure comprises 642 residues: Threonine--tRNA ligase (642 aa).

The TGS domain maps to methionine 1–threonine 61. A catalytic region spans residues aspartate 243–proline 536. Cysteine 336, histidine 387, and histidine 513 together coordinate Zn(2+).

This sequence belongs to the class-II aminoacyl-tRNA synthetase family. Homodimer. The cofactor is Zn(2+).

Its subcellular location is the cytoplasm. The catalysed reaction is tRNA(Thr) + L-threonine + ATP = L-threonyl-tRNA(Thr) + AMP + diphosphate + H(+). Its function is as follows. Catalyzes the attachment of threonine to tRNA(Thr) in a two-step reaction: L-threonine is first activated by ATP to form Thr-AMP and then transferred to the acceptor end of tRNA(Thr). Also edits incorrectly charged L-seryl-tRNA(Thr). This is Threonine--tRNA ligase from Granulibacter bethesdensis (strain ATCC BAA-1260 / CGDNIH1).